The following is a 424-amino-acid chain: Enolase (424 aa).

Gln162 contributes to the (2R)-2-phosphoglycerate binding site. The Proton donor role is filled by Glu204. Asp241, Glu284, and Asp311 together coordinate Mg(2+). Residues Lys336, Arg365, Ser366, and Lys387 each coordinate (2R)-2-phosphoglycerate. The active-site Proton acceptor is the Lys336.

This sequence belongs to the enolase family. The cofactor is Mg(2+).

It localises to the cytoplasm. The protein resides in the secreted. The protein localises to the cell surface. It carries out the reaction (2R)-2-phosphoglycerate = phosphoenolpyruvate + H2O. The protein operates within carbohydrate degradation; glycolysis; pyruvate from D-glyceraldehyde 3-phosphate: step 4/5. In terms of biological role, catalyzes the reversible conversion of 2-phosphoglycerate (2-PG) into phosphoenolpyruvate (PEP). It is essential for the degradation of carbohydrates via glycolysis. This chain is Enolase, found in Sinorhizobium medicae (strain WSM419) (Ensifer medicae).